The chain runs to 368 residues: N-acetylneuraminate epimerase (368 aa).

The signal sequence occupies residues 1 to 19; that stretch reads MNKTITALAIMMASFAANA. Kelch repeat units lie at residues 40–84, 86–137, 139–173, 174–219, 222–265, 287–336, and 338–367; these read TVYI…AFID, NLYV…FVHN, KAYV…KINA, YYFD…VNKG, TWLI…VAGG, ENYQ…PWNN, and LLII…VTVQ. Glu228 functions as the Proton acceptor in the catalytic mechanism.

This sequence belongs to the NanM family. As to quaternary structure, homodimer.

The protein localises to the periplasm. It catalyses the reaction N-acetyl-alpha-neuraminate = N-acetyl-beta-neuraminate. Functionally, converts alpha-N-acetylneuranimic acid (Neu5Ac) to the beta-anomer, accelerating the equilibrium between the alpha- and beta-anomers. Probably facilitates sialidase-negative bacteria to compete successfully for limited amounts of extracellular Neu5Ac, which is likely taken up in the beta-anomer. In addition, the rapid removal of sialic acid from solution might be advantageous to the bacterium to damp down host responses. In Shigella boydii serotype 4 (strain Sb227), this protein is N-acetylneuraminate epimerase.